The following is a 231-amino-acid chain: Demethylmenaquinone methyltransferase (231 aa).

S-adenosyl-L-methionine contacts are provided by residues Thr62, Asp80, 102–103, and Ser119; that span reads DA.

It belongs to the class I-like SAM-binding methyltransferase superfamily. MenG/UbiE family.

It catalyses the reaction a 2-demethylmenaquinol + S-adenosyl-L-methionine = a menaquinol + S-adenosyl-L-homocysteine + H(+). It participates in quinol/quinone metabolism; menaquinone biosynthesis; menaquinol from 1,4-dihydroxy-2-naphthoate: step 2/2. Methyltransferase required for the conversion of demethylmenaquinol (DMKH2) to menaquinol (MKH2). This is Demethylmenaquinone methyltransferase from Streptomyces avermitilis (strain ATCC 31267 / DSM 46492 / JCM 5070 / NBRC 14893 / NCIMB 12804 / NRRL 8165 / MA-4680).